Here is a 460-residue protein sequence, read N- to C-terminus: Chromosomal replication initiator protein DnaA (460 aa).

The interval 1-84 (MAVSLWQQCI…RFDIGSRPSA (84 aa)) is domain I, interacts with DnaA modulators. Residues 84-123 (AKKPEPAPVAAVRVPNPQTKASVGTSFNTTEPVANANHRS) form a domain II region. The domain III, AAA+ region stretch occupies residues 124–340 (NINPTYQFDN…GALNRVIANA (217 aa)). The ATP site is built by Gly-168, Gly-170, Lys-171, and Thr-172. The tract at residues 341-460 (NFTGRPITID…YANLIRTLSS (120 aa)) is domain IV, binds dsDNA.

This sequence belongs to the DnaA family. As to quaternary structure, oligomerizes as a right-handed, spiral filament on DNA at oriC.

The protein resides in the cytoplasm. Functionally, plays an essential role in the initiation and regulation of chromosomal replication. ATP-DnaA binds to the origin of replication (oriC) to initiate formation of the DNA replication initiation complex once per cell cycle. Binds the DnaA box (a 9 base pair repeat at the origin) and separates the double-stranded (ds)DNA. Forms a right-handed helical filament on oriC DNA; dsDNA binds to the exterior of the filament while single-stranded (ss)DNA is stabiized in the filament's interior. The ATP-DnaA-oriC complex binds and stabilizes one strand of the AT-rich DNA unwinding element (DUE), permitting loading of DNA polymerase. After initiation quickly degrades to an ADP-DnaA complex that is not apt for DNA replication. Binds acidic phospholipids. The chain is Chromosomal replication initiator protein DnaA from Shewanella sp. (strain ANA-3).